Reading from the N-terminus, the 800-residue chain is DNA topoisomerase 4 subunit A (800 aa).

The Topo IIA-type catalytic domain occupies 31 to 496 (LPDVRDGLKP…ISEIKIDKEV (466 aa)). Tyr119 functions as the O-(5'-phospho-DNA)-tyrosine intermediate in the catalytic mechanism.

This sequence belongs to the type II topoisomerase GyrA/ParC subunit family. ParC type 2 subfamily. Heterotetramer composed of ParC and ParE.

It localises to the cell membrane. The catalysed reaction is ATP-dependent breakage, passage and rejoining of double-stranded DNA.. In terms of biological role, topoisomerase IV is essential for chromosome segregation. It relaxes supercoiled DNA. Performs the decatenation events required during the replication of a circular DNA molecule. In Staphylococcus epidermidis (strain ATCC 12228 / FDA PCI 1200), this protein is DNA topoisomerase 4 subunit A.